The chain runs to 329 residues: Malate dehydrogenase (329 aa).

Residue 12 to 18 (GAAGQIG) coordinates NAD(+). Residues arginine 93 and arginine 99 each coordinate substrate. Residues asparagine 106, glutamine 113, and 130–132 (VGN) each bind NAD(+). Asparagine 132 and arginine 163 together coordinate substrate. The active-site Proton acceptor is histidine 188.

This sequence belongs to the LDH/MDH superfamily. MDH type 2 family.

The enzyme catalyses (S)-malate + NAD(+) = oxaloacetate + NADH + H(+). Its function is as follows. Catalyzes the reversible oxidation of malate to oxaloacetate. This chain is Malate dehydrogenase, found in Frankia casuarinae (strain DSM 45818 / CECT 9043 / HFP020203 / CcI3).